Consider the following 463-residue polypeptide: D(2)-like dopamine receptor (463 aa).

Topologically, residues 1–35 (MDVFTQYAYNDSIFDNGTWSANETTKDETHPYNYY) are extracellular. Residues Asn10, Asn16, and Asn22 are each glycosylated (N-linked (GlcNAc...) asparagine). Residues 36–58 (AMLLTLLIFVIVFGNVLVCMAVS) form a helical membrane-spanning segment. The Cytoplasmic segment spans residues 59 to 68 (REKALQTTTN). The chain crosses the membrane as a helical span at residues 69-91 (YLIVSLAVADLLVATLVMPWVVY). Topologically, residues 92–106 (LEVVGEWRFSKIHCD) are extracellular. A disulfide bridge connects residues Cys105 and Cys183. Residues 107–128 (IFVTLDVMMCTASILNLCAISI) form a helical membrane-spanning segment. Topologically, residues 129 to 149 (DRYTAVAMPMLYNTRYSSRRR) are cytoplasmic. Residues 150 to 170 (VTVMISVVWVLSFAISCPLLF) form a helical membrane-spanning segment. Over 171–189 (GLNNTATRDQSLCFIANPA) the chain is Extracellular. A helical membrane pass occupies residues 190 to 214 (FVVYSSIVSFYVPFIVTLLVYVQIY). At 215–392 (VVLRKRRKRV…SQQKEKKATQ (178 aa)) the chain is on the cytoplasmic side. A disordered region spans residues 295 to 362 (CGGSHKQPPP…KEAQGNPAPV (68 aa)). Residues 315-329 (PATSHQLLMSTKANA) show a composition bias toward polar residues. The span at 341–353 (EGQRTEKNGDPTK) shows a compositional bias: basic and acidic residues. The helical transmembrane segment at 393-414 (MLAIVLGVFIICWLPFFITHIL) threads the bilayer. The Extracellular segment spans residues 415 to 429 (NTHCTRCKVPAEMYN). Cys418 and Cys421 are disulfide-bonded. The chain crosses the membrane as a helical span at residues 430–451 (AFTWLGYVNSAVNPIIYTTFNV). Residues 452–463 (EFRKAFIKILHC) lie on the Cytoplasmic side of the membrane.

It belongs to the G-protein coupled receptor 1 family.

Its subcellular location is the cell membrane. In terms of biological role, receptor for dopamine. The chain is D(2)-like dopamine receptor (d215) from Takifugu rubripes (Japanese pufferfish).